The sequence spans 267 residues: MSGGGVIRGPAGNNDCRIYVGNLPPDIRTKDIEDVFYKYGAIRDIDLKNRRGGPPFAFVEFEDPRDAEDAVYGRDGYDYDGYRLRVEFPRSGRGAGGRGGGGGGGGGGGGGGGGGGGGGGGGGGGAPRGRYGPPSRRSEYRVVVSGLPPSGSWQDLKDHMREAGDVCYADVFRDGTGVVEFVRKEDMTYAVRKLDNTKFRSHEGETAYIRVKVDGPRSPSYGRSRSRSRSRSRSRSRSNSRSRSYSPRRSRGSPRYSPRHSRSRSRT.

Residues 16–91 (CRIYVGNLPP…YRLRVEFPRS (76 aa)) form the RRM 1 domain. Disordered stretches follow at residues 90–137 (RSGR…PSRR) and 212–267 (KVDG…RSRT). Gly residues predominate over residues 93 to 127 (RGAGGRGGGGGGGGGGGGGGGGGGGGGGGGGGGAP). The RRM 2 domain occupies 140 to 214 (YRVVVSGLPP…ETAYIRVKVD (75 aa)). The segment covering 224-267 (SRSRSRSRSRSRSRSNSRSRSYSPRRSRGSPRYSPRHSRSRSRT) has biased composition (basic residues).

It belongs to the splicing factor SR family.

The protein resides in the cytoplasm. The protein localises to the nucleus speckle. Functionally, may play a role in preventing exon skipping, ensuring the accuracy of splicing and regulating alternative splicing. This is Serine/arginine-rich splicing factor 1 (srsf1) from Xenopus tropicalis (Western clawed frog).